A 243-amino-acid polypeptide reads, in one-letter code: Carboxy-S-adenosyl-L-methionine synthase (243 aa).

S-adenosyl-L-methionine is bound by residues tyrosine 40, 65–67, 90–91, 118–119, asparagine 133, and arginine 200; these read GCS, DN, and DI.

Belongs to the class I-like SAM-binding methyltransferase superfamily. Cx-SAM synthase family. In terms of assembly, homodimer.

It catalyses the reaction prephenate + S-adenosyl-L-methionine = carboxy-S-adenosyl-L-methionine + 3-phenylpyruvate + H2O. Functionally, catalyzes the conversion of S-adenosyl-L-methionine (SAM) to carboxy-S-adenosyl-L-methionine (Cx-SAM). In Shewanella oneidensis (strain ATCC 700550 / JCM 31522 / CIP 106686 / LMG 19005 / NCIMB 14063 / MR-1), this protein is Carboxy-S-adenosyl-L-methionine synthase.